The sequence spans 219 residues: MTQDELKKAVGWAALDYVTPGTIVGVGTGSTAAHFIDALASIKHQIEGTVSSSEMSTARLKAYGIPVFDLNEIDALSLYVDGADEINGQMQMIKGGGAALTREKIIAAVADRFICIADESKQVDVLGHFPLPVEVIPMARSYVARELVKLGGLPEYRQDVITDNGNIILDVYNLSIIDPIRLETAINALTGVVTVGLFAARGADVALIGTADGVKTIKK.

Residues 28–31 (TGST), 81–84 (DGAD), and 94–97 (KGGG) each bind substrate. E103 acts as the Proton acceptor in catalysis. Residue K121 coordinates substrate.

The protein belongs to the ribose 5-phosphate isomerase family. As to quaternary structure, homodimer.

The enzyme catalyses aldehydo-D-ribose 5-phosphate = D-ribulose 5-phosphate. It functions in the pathway carbohydrate degradation; pentose phosphate pathway; D-ribose 5-phosphate from D-ribulose 5-phosphate (non-oxidative stage): step 1/1. In terms of biological role, catalyzes the reversible conversion of ribose-5-phosphate to ribulose 5-phosphate. This chain is Ribose-5-phosphate isomerase A, found in Erwinia tasmaniensis (strain DSM 17950 / CFBP 7177 / CIP 109463 / NCPPB 4357 / Et1/99).